The chain runs to 420 residues: Tyrosine--tRNA ligase (420 aa).

Position 39 (tyrosine 39) interacts with L-tyrosine. The 'HIGH' region motif lies at 44 to 53 (CTAPSLHIGS). L-tyrosine contacts are provided by tyrosine 176 and glutamine 180. The short motif at 236-240 (KMGKT) is the 'KMSKS' region element. Residue lysine 239 coordinates ATP. One can recognise an S4 RNA-binding domain in the interval 349-414 (IPLIDLLYDT…AGKKRHIKIL (66 aa)).

The protein belongs to the class-I aminoacyl-tRNA synthetase family. TyrS type 1 subfamily. Homodimer.

The protein localises to the cytoplasm. The enzyme catalyses tRNA(Tyr) + L-tyrosine + ATP = L-tyrosyl-tRNA(Tyr) + AMP + diphosphate + H(+). In terms of biological role, catalyzes the attachment of tyrosine to tRNA(Tyr) in a two-step reaction: tyrosine is first activated by ATP to form Tyr-AMP and then transferred to the acceptor end of tRNA(Tyr). The protein is Tyrosine--tRNA ligase of Wolbachia pipientis subsp. Culex pipiens (strain wPip).